Reading from the N-terminus, the 149-residue chain is Transcriptional regulator MraZ (149 aa).

2 SpoVT-AbrB domains span residues 7-54 (KYVN…GISH) and 83-126 (AVQL…QPQN).

It belongs to the MraZ family. In terms of assembly, forms oligomers.

It is found in the cytoplasm. The protein localises to the nucleoid. This chain is Transcriptional regulator MraZ, found in Rickettsia felis (strain ATCC VR-1525 / URRWXCal2) (Rickettsia azadi).